The following is a 222-amino-acid chain: Superoxide dismutase [Mn], mitochondrial (222 aa).

The N-terminal 24 residues, 1-24 (MLSRAVCGTSRQLAPVLGYLGSRQ), are a transit peptide targeting the mitochondrion. Residue His50 participates in Mn(2+) binding. Tyr58 is modified (3'-nitrotyrosine). Residues Lys68 and Lys75 each carry the N6-acetyllysine; alternate modification. N6-succinyllysine; alternate is present on residues Lys68 and Lys75. His98 contributes to the Mn(2+) binding site. Position 114 is an N6-acetyllysine (Lys114). N6-acetyllysine; alternate occurs at positions 122 and 130. N6-succinyllysine; alternate is present on residues Lys122 and Lys130. Positions 183 and 187 each coordinate Mn(2+). Lys202 is modified (N6-acetyllysine).

It belongs to the iron/manganese superoxide dismutase family. Homotetramer. Requires Mn(2+) as cofactor. Post-translationally, nitrated under oxidative stress. Nitration coupled with oxidation inhibits the catalytic activity. In terms of processing, acetylation at Lys-122 decreases enzymatic activity. Deacetylated by SIRT3 upon exposure to ionizing radiations or after long fasting. Polyubiquitinated; leading to proteasomal degradation. Deubiquitinated by USP36 which increases protein stability.

The protein resides in the mitochondrion matrix. The catalysed reaction is 2 superoxide + 2 H(+) = H2O2 + O2. Its function is as follows. Destroys superoxide anion radicals which are normally produced within the cells and which are toxic to biological systems. The sequence is that of Superoxide dismutase [Mn], mitochondrial (SOD2) from Homo sapiens (Human).